A 408-amino-acid chain; its full sequence is Phosphopentomutase (408 aa).

Positions 10, 303, 308, 344, 345, and 356 each coordinate Mn(2+).

Belongs to the phosphopentomutase family. It depends on Mn(2+) as a cofactor.

It localises to the cytoplasm. The catalysed reaction is 2-deoxy-alpha-D-ribose 1-phosphate = 2-deoxy-D-ribose 5-phosphate. The enzyme catalyses alpha-D-ribose 1-phosphate = D-ribose 5-phosphate. It participates in carbohydrate degradation; 2-deoxy-D-ribose 1-phosphate degradation; D-glyceraldehyde 3-phosphate and acetaldehyde from 2-deoxy-alpha-D-ribose 1-phosphate: step 1/2. Its function is as follows. Isomerase that catalyzes the conversion of deoxy-ribose 1-phosphate (dRib-1-P) and ribose 1-phosphate (Rib-1-P) to deoxy-ribose 5-phosphate (dRib-5-P) and ribose 5-phosphate (Rib-5-P), respectively. This is Phosphopentomutase from Tolumonas auensis (strain DSM 9187 / NBRC 110442 / TA 4).